A 255-amino-acid chain; its full sequence is Electron transfer flavoprotein beta subunit lysine methyltransferase (255 aa).

A mitochondrion-targeting transit peptide spans 1 to 32; the sequence is MAFSLCWKAPRSQWSFLQALNSGFPLFPWRTV.

It belongs to the methyltransferase superfamily. ETFBKMT family. Interacts with HSPD1; this protein may possibly be a methylation substrate.

Its subcellular location is the cytoplasm. The protein resides in the mitochondrion matrix. It catalyses the reaction L-lysyl-[protein] + 3 S-adenosyl-L-methionine = N(6),N(6),N(6)-trimethyl-L-lysyl-[protein] + 3 S-adenosyl-L-homocysteine + 3 H(+). Functionally, protein-lysine methyltransferase that selectively trimethylates the flavoprotein ETFB in mitochondria. Thereby, may negatively regulate the function of ETFB in electron transfer from Acyl-CoA dehydrogenases to the main respiratory chain. In Rattus norvegicus (Rat), this protein is Electron transfer flavoprotein beta subunit lysine methyltransferase.